We begin with the raw amino-acid sequence, 310 residues long: MIIVTGGAGFIGSNIVKALNDKGITDILVVDNLKDGTKFVNLVDLDIADYMDKEDFLIQIMAGEEFGDVEAIFHEGACSSTTEWDGKYMMDNNYQYSKELLHYCLEREIPLLYASSAATYGGRTSDFIESREYEKPLNVYGYSKFLFDEYVRQILPEANSQIVGFRYFNVYGPREGHKGSMASVAFHLNTQLNNGESPKLFEGSENFKRDFVYVGDVADVNLWFLENGVSGIFNLGTGRAESFQAVADATLAYHKKGQIEYIPFPDKLKGRYQAFTQADLTNLRAAGYDKPFKTVAEGVTEYMAWLNRDA.

NADP(+) is bound by residues Phe-10–Ile-11, Asp-31–Asn-32, Lys-38, Lys-53, Glu-75–Ser-79, and Asn-92. The active-site Proton acceptor is the Tyr-140. Lys-144 is a binding site for NADP(+). Asn-169 provides a ligand contact to substrate. NADP(+) is bound by residues Val-170 and Lys-178. Catalysis depends on Lys-178, which acts as the Proton acceptor. Substrate-binding positions include Ser-180, His-187, Phe-201–Ser-204, and Arg-209. Lys-267 is modified (N6-acetyllysine). Tyr-272 serves as a coordination point for substrate.

Belongs to the NAD(P)-dependent epimerase/dehydratase family. HldD subfamily. In terms of assembly, homopentamer. Requires NADP(+) as cofactor.

It catalyses the reaction ADP-D-glycero-beta-D-manno-heptose = ADP-L-glycero-beta-D-manno-heptose. Its pathway is nucleotide-sugar biosynthesis; ADP-L-glycero-beta-D-manno-heptose biosynthesis; ADP-L-glycero-beta-D-manno-heptose from D-glycero-beta-D-manno-heptose 7-phosphate: step 4/4. Catalyzes the interconversion between ADP-D-glycero-beta-D-manno-heptose and ADP-L-glycero-beta-D-manno-heptose via an epimerization at carbon 6 of the heptose. This is ADP-L-glycero-D-manno-heptose-6-epimerase from Escherichia coli (strain SMS-3-5 / SECEC).